Reading from the N-terminus, the 383-residue chain is Cytochrome b (383 aa).

4 helical membrane-spanning segments follow: residues 34-54 (FGSLLGLTLMIQILTGVFLMM), 78-99 (WLIRSFHTNGASIFFMFIFLHI), 114-134 (WNVGVIMLFLLMATAFMGYVL), and 179-199 (FTALHFLLPFIILALLITHLI). Residues His-84 and His-98 each coordinate heme b. Residues His-183 and His-197 each contribute to the heme b site. His-202 contacts a ubiquinone. The next 4 membrane-spanning stretches (helical) occupy residues 227–247 (MKDVLGAVLAASMLLTLALYL), 289–309 (LGGVLAMFSSIFILLLIPFLH), 321–341 (LSQLLFWTLILNFLALTWIGG), and 348–368 (YILLGQITSLLYFITILILMP).

Belongs to the cytochrome b family. As to quaternary structure, the cytochrome bc1 complex contains 3 respiratory subunits (MT-CYB, CYC1 and UQCRFS1), 2 core proteins (UQCRC1 and UQCRC2) and probably 6 low-molecular weight proteins. Heme b serves as cofactor.

The protein localises to the mitochondrion inner membrane. Its function is as follows. Component of the ubiquinol-cytochrome c reductase complex (complex III or cytochrome b-c1 complex) that is part of the mitochondrial respiratory chain. The b-c1 complex mediates electron transfer from ubiquinol to cytochrome c. Contributes to the generation of a proton gradient across the mitochondrial membrane that is then used for ATP synthesis. This chain is Cytochrome b (MT-CYB), found in Caiman crocodilus (Spectacled caiman).